Here is a 195-residue protein sequence, read N- to C-terminus: UPF0215 protein TGAM_0348 (195 aa).

The protein belongs to the UPF0215 family.

The polypeptide is UPF0215 protein TGAM_0348 (Thermococcus gammatolerans (strain DSM 15229 / JCM 11827 / EJ3)).